The sequence spans 103 residues: Large ribosomal subunit protein bL21 (103 aa).

The protein belongs to the bacterial ribosomal protein bL21 family. As to quaternary structure, part of the 50S ribosomal subunit. Contacts protein L20.

Functionally, this protein binds to 23S rRNA in the presence of protein L20. The chain is Large ribosomal subunit protein bL21 from Enterobacter sp. (strain 638).